The chain runs to 190 residues: Thioredoxin F-type, chloroplastic (190 aa).

Residues 1–31 (MALHLSLSHQSWTSPAHPITSSDPTRSSVPG) are disordered. The N-terminal 77 residues, 1-77 (MALHLSLSHQ…SMEQALGTQE (77 aa)), are a transit peptide targeting the chloroplast. The span at 7–30 (LSHQSWTSPAHPITSSDPTRSSVP) shows a compositional bias: polar residues. In terms of domain architecture, Thioredoxin spans 78–189 (MEAIVGKVTE…LLEAIQAARS (112 aa)). Catalysis depends on nucleophile residues Cys-114 and Cys-117. Cys-114 and Cys-117 form a disulfide bridge.

Belongs to the thioredoxin family. Plant F-type subfamily. As to quaternary structure, forms a complex with heterodimeric ferredoxin-thioredoxin reductase (FTR) and ferredoxin.

The protein resides in the plastid. The protein localises to the chloroplast. Functionally, participates in various redox reactions through the reversible oxidation of the active center dithiol to a disulfide. The F form is known to activate a number of enzymes of the photosynthetic carbon cycle. In Spinacia oleracea (Spinach), this protein is Thioredoxin F-type, chloroplastic.